The primary structure comprises 937 residues: Protocadherin alpha-7 (937 aa).

A signal peptide spans 1–29; that stretch reads MVCPNGYDPGGRHLLLFIIILAAWEAGRG. 6 consecutive Cadherin domains span residues 30-133, 134-242, 243-350, 351-455, 456-565, and 581-678; these read QLHY…PPVF, PATQ…APVF, DRTL…APQL, TLTS…APAF, AQPE…APAL, and VPRS…APKA. Residues 30–697 lie on the Extracellular side of the membrane; that stretch reads QLHYSVPEEA…GPETELVDVN (668 aa). Cysteines 96 and 102 form a disulfide. Residues asparagine 254 and asparagine 265 are each glycosylated (N-linked (GlcNAc...) asparagine). Asparagine 548 carries N-linked (GlcNAc...) asparagine glycosylation. A helical transmembrane segment spans residues 698–718; that stretch reads VYLIIAICAVSSLLVLTLLLY. At 719–937 the chain is on the cytoplasmic side; it reads TALRCSAPSS…GNSTTDNSDQ (219 aa). 2 disordered regions span residues 755–795 and 814–937; these read RQRV…DWRY and ILRA…NSDQ. PXXP repeat units lie at residues 774–777, 786–789, 819–822, 860–863, and 878–881; these read PSLP, PRQP, PGGP, PGNP, and PGSP. The interval 774-881 is 5 X 4 AA repeats of P-X-X-P; it reads PSLPQGPSST…PDKFIIPGSP (108 aa). The span at 775–787 shows a compositional bias: polar residues; the sequence is SLPQGPSSTDNPR. Positions 896–910 are enriched in basic and acidic residues; it reads DKSDFITFGKKEETK.

Forms homodimers in trans (molecules expressed by two different cells). Forms promiscuous heterodimers in cis (at the plasma membrane of the same cell) with other protocadherins.

The protein localises to the cell membrane. In terms of biological role, calcium-dependent cell-adhesion protein involved in cells self-recognition and non-self discrimination. Thereby, it is involved in the establishment and maintenance of specific neuronal connections in the brain. The chain is Protocadherin alpha-7 from Homo sapiens (Human).